The chain runs to 49 residues: MRVNVTLACTECGDRNYISTKNKRTNPERVEMKKYCSRDNKHTLHRETK.

Belongs to the bacterial ribosomal protein bL33 family.

This Staphylococcus haemolyticus (strain JCSC1435) protein is Large ribosomal subunit protein bL33A.